We begin with the raw amino-acid sequence, 563 residues long: Sulfite reductase [NADPH] hemoprotein beta-component (563 aa).

[4Fe-4S] cluster contacts are provided by cysteine 427, cysteine 433, cysteine 472, and cysteine 476. Cysteine 476 provides a ligand contact to siroheme.

The protein belongs to the nitrite and sulfite reductase 4Fe-4S domain family. In terms of assembly, alpha(8)-beta(8). The alpha component is a flavoprotein, the beta component is a hemoprotein. The cofactor is siroheme. [4Fe-4S] cluster serves as cofactor.

It carries out the reaction hydrogen sulfide + 3 NADP(+) + 3 H2O = sulfite + 3 NADPH + 4 H(+). Its pathway is sulfur metabolism; hydrogen sulfide biosynthesis; hydrogen sulfide from sulfite (NADPH route): step 1/1. Component of the sulfite reductase complex that catalyzes the 6-electron reduction of sulfite to sulfide. This is one of several activities required for the biosynthesis of L-cysteine from sulfate. The polypeptide is Sulfite reductase [NADPH] hemoprotein beta-component (Shewanella frigidimarina (strain NCIMB 400)).